The sequence spans 609 residues: Elongation factor 4 (609 aa).

A tr-type G domain is found at S5–E187. Residues D17 to T22 and N134 to D137 contribute to the GTP site.

This sequence belongs to the TRAFAC class translation factor GTPase superfamily. Classic translation factor GTPase family. LepA subfamily.

Its subcellular location is the cell inner membrane. The enzyme catalyses GTP + H2O = GDP + phosphate + H(+). Required for accurate and efficient protein synthesis under certain stress conditions. May act as a fidelity factor of the translation reaction, by catalyzing a one-codon backward translocation of tRNAs on improperly translocated ribosomes. Back-translocation proceeds from a post-translocation (POST) complex to a pre-translocation (PRE) complex, thus giving elongation factor G a second chance to translocate the tRNAs correctly. Binds to ribosomes in a GTP-dependent manner. This is Elongation factor 4 from Erythrobacter litoralis (strain HTCC2594).